Consider the following 84-residue polypeptide: Small ribosomal subunit protein uS17 (84 aa).

This sequence belongs to the universal ribosomal protein uS17 family. As to quaternary structure, part of the 30S ribosomal subunit.

Functionally, one of the primary rRNA binding proteins, it binds specifically to the 5'-end of 16S ribosomal RNA. In Borrelia hermsii (strain HS1 / DAH), this protein is Small ribosomal subunit protein uS17.